Reading from the N-terminus, the 305-residue chain is U6 small nuclear RNA (adenine-(43)-N(6))-methyltransferase (305 aa).

S-adenosyl-L-methionine contacts are provided by arginine 85, glycine 110, glutamate 133, serine 164, and asparagine 186. Residues 194-217 are disordered; that stretch reads SPNPFGGNTRNPQRRPAPNNVRTG.

This sequence belongs to the methyltransferase superfamily. METTL16/RlmF family.

It catalyses the reaction adenosine in U6 snRNA + S-adenosyl-L-methionine = N(6)-methyladenosine in U6 snRNA + S-adenosyl-L-homocysteine + H(+). In terms of biological role, RNA N6-methyltransferase that mediates N6-methylation of adenine of U6 small nuclear RNA (U6 snRNA). The polypeptide is U6 small nuclear RNA (adenine-(43)-N(6))-methyltransferase (Drosophila pseudoobscura pseudoobscura (Fruit fly)).